A 347-amino-acid polypeptide reads, in one-letter code: TEGPDFYIPMVNTTGVVRSPYEYPQYYLVNPAAFAVLGAYMFFLIIIGFPINFLTLYVTLEHKKLRTPLNYILLNLAVADLFMVIGGFTTTMYSSMHGYFVLGRLGCNIEGFFATLGGMISLWSLAVLAIERWVVVCKPISNFRFGENHAIMGVSLTWVMALACTVPPLVGWSRYIPEGMQCACGIDYYTRAEGYNNESFVIYMFTFHFLFPMFIIFFCYGRLLCAVKEAAAAQQESETTQRAEREVTRMVILMVIGYLVCWLPYASVAWFIFTHKGSEFGPLFMAVPSFFAKSSSIYNPIIYICMNKQFRQCMITTLFCGKNPFEGQEEDSSTKTEASSASSVSPA.

At 1–33 the chain is on the extracellular side; it reads TEGPDFYIPMVNTTGVVRSPYEYPQYYLVNPAA. Residue Asn12 is glycosylated (N-linked (GlcNAc...) asparagine). A helical transmembrane segment spans residues 34–58; sequence FAVLGAYMFFLIIIGFPINFLTLYV. At 59 to 70 the chain is on the cytoplasmic side; it reads TLEHKKLRTPLN. A helical membrane pass occupies residues 71 to 93; sequence YILLNLAVADLFMVIGGFTTTMY. Over 94–107 the chain is Extracellular; sequence SSMHGYFVLGRLGC. Cysteines 107 and 184 form a disulfide. Residues 108-130 form a helical membrane-spanning segment; sequence NIEGFFATLGGMISLWSLAVLAI. The 'Ionic lock' involved in activated form stabilization signature appears at 131 to 133; sequence ERW. Over 131–149 the chain is Cytoplasmic; that stretch reads ERWVVVCKPISNFRFGENH. Residues 150–170 form a helical membrane-spanning segment; that stretch reads AIMGVSLTWVMALACTVPPLV. Residues 171-199 are Extracellular-facing; that stretch reads GWSRYIPEGMQCACGIDYYTRAEGYNNES. Asn197 carries an N-linked (GlcNAc...) asparagine glycan. A helical membrane pass occupies residues 200-221; sequence FVIYMFTFHFLFPMFIIFFCYG. At 222–249 the chain is on the cytoplasmic side; it reads RLLCAVKEAAAAQQESETTQRAEREVTR. Residues 250-271 traverse the membrane as a helical segment; that stretch reads MVILMVIGYLVCWLPYASVAWF. Topologically, residues 272–283 are extracellular; the sequence is IFTHKGSEFGPL. Residues 284–305 form a helical membrane-spanning segment; sequence FMAVPSFFAKSSSIYNPIIYIC. An N6-(retinylidene)lysine modification is found at Lys293. The Cytoplasmic portion of the chain corresponds to 306–347; it reads MNKQFRQCMITTLFCGKNPFEGQEEDSSTKTEASSASSVSPA. The S-palmitoyl cysteine moiety is linked to residue Cys320. The disordered stretch occupies residues 326–347; the sequence is EGQEEDSSTKTEASSASSVSPA. A compositionally biased stretch (low complexity) spans 335–347; the sequence is KTEASSASSVSPA.

This sequence belongs to the G-protein coupled receptor 1 family. Opsin subfamily. Post-translationally, phosphorylated on some or all of the serine and threonine residues present in the C-terminal region. In terms of processing, contains one covalently linked retinal chromophore.

It is found in the membrane. The protein localises to the cell projection. It localises to the cilium. The protein resides in the photoreceptor outer segment. Functionally, photoreceptor required for image-forming vision at low light intensity. While most salt water fish species use retinal as chromophore, most freshwater fish use 3-dehydroretinal, or a mixture of retinal and 3-dehydroretinal. Light-induced isomerization of 11-cis to all-trans retinal triggers a conformational change that activates signaling via G-proteins. Subsequent receptor phosphorylation mediates displacement of the bound G-protein alpha subunit by arrestin and terminates signaling. The chain is Rhodopsin (rho) from Sargocentron tiere (Blue lined squirrelfish).